The chain runs to 166 residues: Protein-export protein SecB (166 aa).

The protein belongs to the SecB family. As to quaternary structure, homotetramer, a dimer of dimers. One homotetramer interacts with 1 SecA dimer.

It is found in the cytoplasm. Its function is as follows. One of the proteins required for the normal export of preproteins out of the cell cytoplasm. It is a molecular chaperone that binds to a subset of precursor proteins, maintaining them in a translocation-competent state. It also specifically binds to its receptor SecA. The chain is Protein-export protein SecB from Actinobacillus succinogenes (strain ATCC 55618 / DSM 22257 / CCUG 43843 / 130Z).